The chain runs to 176 residues: dCTP deaminase (176 aa).

Residues 99 to 104 (RSTLAR) and Asp-115 each bind dCTP. Glu-125 (proton donor/acceptor) is an active-site residue. Gln-163 is a binding site for dCTP.

Belongs to the dCTP deaminase family. Homotrimer.

It carries out the reaction dCTP + H2O + H(+) = dUTP + NH4(+). It participates in pyrimidine metabolism; dUMP biosynthesis; dUMP from dCTP (dUTP route): step 1/2. Functionally, catalyzes the deamination of dCTP to dUTP. This Pyrobaculum islandicum (strain DSM 4184 / JCM 9189 / GEO3) protein is dCTP deaminase.